A 693-amino-acid polypeptide reads, in one-letter code: MTTSFGAAINIAVADDPNPKLQIHNFSGLKSTSNSLLLSRRLHVFQSFSPSNPSSIVRAVSTPAKPAAVEPKRSKVEIFKEQSNFIRYPLNEEILNDAPNINEAATQLIKFHGSYMQYDRDERGGRSYSFMLRTKNPGGEVPNRLYLVMDDLADQFGIGTLRLTTRQTFQLHGVLKKNLKTVMSTIIKNMGSTLGACGDLNRNVLAPAAPFAKKDYMFAKQTADNIAALLTPQSGFYYDVWVDGEKVMTAEPPEVVKARNDNSHGTNFPDSPEPIYGTQFLPRKFKIAVTVPTDNSVDIFTNDIGVVVVSNEDGEPQGFNIYVGGGMGRTHRMETTFPRLAEPLGYVPKEDILYAVKAIVVTQRENGRRDDRRYSRLKYLLSSWGIEKFRSVTEQYYGKKFQPCRELPEWEFKSYLGWHEAGDGSLFCGLHVDNGRVKGAMKKALREVIEKYNLNVRLTPNQNIILCNIRQAWKRPITTVLAQGGLLQPRYVDPLNLTAMACPAFPLCPLAITEAERGIPDILKRVRAIFERVGLKYSESVVIRITGCPNGCARPYMAELGLVGDGPNSYQIWLGGTPNQTSLAKTFKDKLKVQDLEKVLEPLFFHWRRKRQSKESFGDFTNRMGFEKLGEFVEKWEGIPESSSRYNLKLFADRETYEAMDALASIQDKNAHQLAIEVVRNYVASQQNGKSMD.

The N-terminal 62 residues, 1-62 (MTTSFGAAIN…PSSIVRAVST (62 aa)), are a transit peptide targeting the chloroplast. C502, C508, C548, and C552 together coordinate [4Fe-4S] cluster. Position 552 (C552) interacts with siroheme.

The protein belongs to the nitrite and sulfite reductase 4Fe-4S domain family. As to quaternary structure, monomer. Interacts with ferredoxin. It depends on siroheme as a cofactor. The cofactor is [4Fe-4S] cluster. Phosphorylated; this phosphorylation reduces DNA-binding. In terms of tissue distribution, expressed in leaves, stems, roots and petals.

The protein resides in the plastid. It localises to the chloroplast stroma. Its subcellular location is the chloroplast nucleoid. It is found in the plastid stroma. It carries out the reaction hydrogen sulfide + 6 oxidized [2Fe-2S]-[ferredoxin] + 3 H2O = sulfite + 6 reduced [2Fe-2S]-[ferredoxin] + 7 H(+). Its function is as follows. Essential protein with sulfite reductase activity required in assimilatory sulfate reduction pathway during both primary and secondary metabolism and thus involved in development and growth. DNA-binding protein that binds to both double-stranded and single-stranded DNA without significant sequence specificity to reversibly repress the transcriptional activity of chloroplast nucleoids by promoting DNA compaction and possibly regulate DNA replication. This chain is Sulfite reductase 1 [ferredoxin], chloroplastic (SIR1), found in Nicotiana tabacum (Common tobacco).